The primary structure comprises 373 residues: Chaperone protein DnaJ (373 aa).

A J domain is found at 5 to 71 (DYYEILGVSR…EKRAMYDKFG (67 aa)). A CR-type zinc finger spans residues 144–226 (GVKIPLEYDR…CGGTGRIRKR (83 aa)). Residues C157, C160, C174, C177, C200, C203, C214, and C217 each contribute to the Zn(2+) site. CXXCXGXG motif repeat units lie at residues 157-164 (CEHCHGEG), 174-181 (CPKCHGTG), 200-207 (CNQCGGTG), and 214-221 (CRVCGGTG).

The protein belongs to the DnaJ family. In terms of assembly, homodimer. Requires Zn(2+) as cofactor.

It localises to the cytoplasm. Participates actively in the response to hyperosmotic and heat shock by preventing the aggregation of stress-denatured proteins and by disaggregating proteins, also in an autonomous, DnaK-independent fashion. Unfolded proteins bind initially to DnaJ; upon interaction with the DnaJ-bound protein, DnaK hydrolyzes its bound ATP, resulting in the formation of a stable complex. GrpE releases ADP from DnaK; ATP binding to DnaK triggers the release of the substrate protein, thus completing the reaction cycle. Several rounds of ATP-dependent interactions between DnaJ, DnaK and GrpE are required for fully efficient folding. Also involved, together with DnaK and GrpE, in the DNA replication of plasmids through activation of initiation proteins. In Thermosipho melanesiensis (strain DSM 12029 / CIP 104789 / BI429), this protein is Chaperone protein DnaJ.